Here is a 469-residue protein sequence, read N- to C-terminus: Endoplasmic reticulum oxidoreductin-1 (469 aa).

Residues 1–36 (MGKGAIKEEESEKKRKTWRWPLATLVVVFLAVAVSS) form the signal peptide. 6 disulfides stabilise this stretch: Cys52–Cys71, Cys54–Cys69, Cys108–Cys372, Cys117–Cys122, Cys222–Cys231, and Cys375–Cys378. Residues Arg201, Thr203, and Trp214 each coordinate FAD. Positions 242, 245, 275, and 282 each coordinate FAD. Asn365 carries an N-linked (GlcNAc...) asparagine glycan.

Belongs to the EROs family. May function both as a monomer and a homodimer. FAD serves as cofactor. In terms of processing, N-glycosylated.

It is found in the endoplasmic reticulum membrane. Essential oxidoreductase that oxidizes proteins in the endoplasmic reticulum to produce disulfide bonds. Acts by oxidizing directly PDI isomerase through a direct disulfide exchange. Does not act as a direct oxidant of folding substrate, but relies on PDI to transfer oxidizing equivalent. Does not oxidize all PDI related proteins, suggesting that it can discriminate between PDI and related proteins. Its reoxidation probably involves electron transfer to molecular oxygen via FAD. Acts independently of glutathione. May be responsible for a significant proportion of reactive oxygen species (ROS) in the cell, thereby being a source of oxidative stress. This chain is Endoplasmic reticulum oxidoreductin-1 (AERO1), found in Arabidopsis thaliana (Mouse-ear cress).